The primary structure comprises 224 residues: BOS complex subunit TMEM147 (224 aa).

The chain crosses the membrane as a helical span at residues 1–21; that stretch reads MTLFHFGNCFALAYFPYFITY. Residues 22-34 lie on the Cytoplasmic side of the membrane; it reads KCSGLSEYNAFWK. The chain crosses the membrane as a helical span at residues 35 to 58; that stretch reads CVQAGVTYLFVQLCKMLFLATFFP. Residues 59–66 lie on the Lumenal side of the membrane; it reads TWEGGIYD. A helical membrane pass occupies residues 67–88; that stretch reads FIGEFMKASVDVADLIGLNLVM. At 89–98 the chain is on the cytoplasmic side; sequence SRNAGKGEYK. The chain crosses the membrane as a helical span at residues 99 to 124; sequence IMVAALGWATAELIMSRCIPLWVGAR. Residues 125–129 are Lumenal-facing; sequence GIEFD. Residues 130 to 155 traverse the membrane as a helical segment; that stretch reads WKYIQMSIDSNISLVHYIVASAQVWM. The Cytoplasmic segment spans residues 156–164; it reads ITRYDLYHT. A helical transmembrane segment spans residues 165–187; sequence FRPAVLLLMFLSVYKAFVMETFV. At 188-194 the chain is on the lumenal side; that stretch reads HLCSLGS. The chain crosses the membrane as a helical span at residues 195-216; it reads WAALLARAVVTGLLALSTLALY. Over 217 to 224 the chain is Cytoplasmic; it reads VAVVNVHS.

It belongs to the TMEM147 family. Component of the back of Sec61 (BOS) complex, composed of NCLN/Nicalin, NOMO (NOMO1, NOMO2 or NOMO3) and TMEM147. The BOS complex is part of the multi-pass translocon (MPT) complex, composed of three subcomplexes, the GEL complex (composed of RAB5IF/OPTI and TMCO1), the BOS complex (composed of NCLN/Nicalin, NOMO and TMEM147) and the PAT complex (composed of WDR83OS/Asterix and CCDC47). The MPT complex associates with the SEC61 complex. Interacts with CHRM3, CHRM1 and AVPR2. Interacts with LBR; promoting LBR localization to the nucleus inner membrane. Interacts with DHCR7.

It is found in the endoplasmic reticulum membrane. The protein resides in the nucleus membrane. The protein localises to the cell membrane. Functionally, component of the multi-pass translocon (MPT) complex that mediates insertion of multi-pass membrane proteins into the lipid bilayer of membranes. The MPT complex takes over after the SEC61 complex: following membrane insertion of the first few transmembrane segments of proteins by the SEC61 complex, the MPT complex occludes the lateral gate of the SEC61 complex to promote insertion of subsequent transmembrane regions. Also acts as a negative regulator of CHRM3 function, most likely by interfering with its trafficking to the cell membrane. Negatively regulates CHRM3-mediated calcium mobilization and activation of RPS6KA1/p90RSK activity. Regulates LBR localization to the nucleus inner membrane. The chain is BOS complex subunit TMEM147 from Homo sapiens (Human).